The primary structure comprises 266 residues: Protein crossbronx-like (266 aa).

The region spanning 15–178 (KQGYHILAEY…VQEQAILSRN (164 aa)) is the UBC core domain. The disordered stretch occupies residues 226-266 (SEYLGHIDSSRQMDEEETNQLEKLHRGRIPEPQREEAEVSL). Basic and acidic residues predominate over residues 245–266 (QLEKLHRGRIPEPQREEAEVSL).

It belongs to the ubiquitin-conjugating enzyme family. FTS subfamily.

This Drosophila sechellia (Fruit fly) protein is Protein crossbronx-like.